Reading from the N-terminus, the 314-residue chain is tRNA uridine(34) hydroxylase (314 aa).

A Rhodanese domain is found at 140–234 (SRDDVILVDT…YLEETPAEES (95 aa)). Catalysis depends on cysteine 194, which acts as the Cysteine persulfide intermediate.

The protein belongs to the TrhO family.

It catalyses the reaction uridine(34) in tRNA + AH2 + O2 = 5-hydroxyuridine(34) in tRNA + A + H2O. Catalyzes oxygen-dependent 5-hydroxyuridine (ho5U) modification at position 34 in tRNAs. In Acinetobacter baylyi (strain ATCC 33305 / BD413 / ADP1), this protein is tRNA uridine(34) hydroxylase.